The chain runs to 141 residues: Hemoglobin subunit alpha (141 aa).

The Globin domain occupies 1–141 (VLSPGDKSNI…VSTVLTSKYR (141 aa)). S3 is modified (phosphoserine). An N6-succinyllysine mark is found at K7 and K11. K16 carries the post-translational modification N6-acetyllysine; alternate. At K16 the chain carries N6-succinyllysine; alternate. Y24 carries the post-translational modification Phosphotyrosine. Residue S35 is modified to Phosphoserine. K40 carries the N6-succinyllysine modification. S49 carries the post-translational modification Phosphoserine. Residue H58 coordinates O2. Position 87 (H87) interacts with heme b. Position 102 is a phosphoserine (S102). Residue T108 is modified to Phosphothreonine. S124 carries the post-translational modification Phosphoserine. A phosphothreonine mark is found at T134 and T137. Phosphoserine is present on S138.

The protein belongs to the globin family. Heterotetramer of two alpha chains and two beta chains. Red blood cells.

In terms of biological role, involved in oxygen transport from the lung to the various peripheral tissues. Hemopressin acts as an antagonist peptide of the cannabinoid receptor CNR1. Hemopressin-binding efficiently blocks cannabinoid receptor CNR1 and subsequent signaling. In Tupaia glis (Common tree shrew), this protein is Hemoglobin subunit alpha (HBA).